Here is a 385-residue protein sequence, read N- to C-terminus: Glucans biosynthesis protein C (385 aa).

The next 10 helical transmembrane spans lie at 17–37 (AWLM…SHTW), 60–80 (MQVF…RYPL), 91–111 (VGIP…IMLQ), 137–157 (ISHL…VWIF), 173–193 (KFSM…YAVI), 212–232 (FIVM…LAFI), 239–259 (LFTT…VAYL), 274–294 (TESV…FSFG), 311–331 (ASLF…AYIT), and 338–358 (WLGF…LYEI).

Belongs to the acyltransferase 3 family. OpgC subfamily.

It is found in the cell membrane. Its pathway is glycan metabolism; osmoregulated periplasmic glucan (OPG) biosynthesis. Functionally, necessary for the succinyl substitution of periplasmic glucans. Could catalyze the transfer of succinyl residues from the cytoplasmic side of the membrane to the nascent glucan backbones on the periplasmic side of the membrane. The chain is Glucans biosynthesis protein C from Escherichia coli (strain SMS-3-5 / SECEC).